Reading from the N-terminus, the 179-residue chain is Ribosome-recycling factor (179 aa).

It belongs to the RRF family.

The protein localises to the cytoplasm. Functionally, responsible for the release of ribosomes from messenger RNA at the termination of protein biosynthesis. May increase the efficiency of translation by recycling ribosomes from one round of translation to another. This is Ribosome-recycling factor from Chlamydia muridarum (strain MoPn / Nigg).